The sequence spans 357 residues: Probable butyrate kinase 1 (357 aa).

It belongs to the acetokinase family.

It is found in the cytoplasm. The catalysed reaction is butanoate + ATP = butanoyl phosphate + ADP. This is Probable butyrate kinase 1 from Thermotoga maritima (strain ATCC 43589 / DSM 3109 / JCM 10099 / NBRC 100826 / MSB8).